The primary structure comprises 130 residues: Small ribosomal subunit protein uS8 (130 aa).

It belongs to the universal ribosomal protein uS8 family. In terms of assembly, part of the 30S ribosomal subunit. Contacts proteins S5 and S12.

Functionally, one of the primary rRNA binding proteins, it binds directly to 16S rRNA central domain where it helps coordinate assembly of the platform of the 30S subunit. The chain is Small ribosomal subunit protein uS8 from Yersinia enterocolitica serotype O:8 / biotype 1B (strain NCTC 13174 / 8081).